The primary structure comprises 295 residues: RNA polymerase sigma factor RpoH (295 aa).

Residues 52 to 121 form a sigma-70 factor domain-2 region; it reads MVTSHLRLVA…IQEYILRSWS (70 aa). The Interaction with polymerase core subunit RpoC motif lies at 76-79; sequence EVIS. The tract at residues 230–281 is sigma-70 factor domain-4; the sequence is AMVELTDRERHILTERRLKDDPTTLEELAAQYGVSRERVRQIEVRAFEKLQK. Residues 254 to 273 constitute a DNA-binding region (H-T-H motif); the sequence is LEELAAQYGVSRERVRQIEV.

This sequence belongs to the sigma-70 factor family. RpoH subfamily. In terms of assembly, interacts with the RNA polymerase core enzyme.

It localises to the cytoplasm. Its function is as follows. Sigma factors are initiation factors that promote the attachment of RNA polymerase to specific initiation sites and are then released. This sigma factor is involved in regulation of expression of heat shock genes. The sequence is that of RNA polymerase sigma factor RpoH from Caulobacter vibrioides (strain ATCC 19089 / CIP 103742 / CB 15) (Caulobacter crescentus).